The sequence spans 362 residues: Ribosome-binding ATPase YchF (362 aa).

The OBG-type G domain occupies 3–255 (FKCGIIGLPN…MSDEEKKSFM (253 aa)). 12 to 17 (NVGKST) contacts ATP. Mg(2+) is bound by residues serine 16 and threonine 36. Positions 277–360 (NLITFFTVGD…QDGDIIHFLF (84 aa)) constitute a TGS domain.

The protein belongs to the TRAFAC class OBG-HflX-like GTPase superfamily. OBG GTPase family. YchF/OLA1 subfamily. Mg(2+) is required as a cofactor.

In terms of biological role, ATPase that binds to both the 70S ribosome and the 50S ribosomal subunit in a nucleotide-independent manner. The polypeptide is Ribosome-binding ATPase YchF (Buchnera aphidicola subsp. Acyrthosiphon pisum (strain APS) (Acyrthosiphon pisum symbiotic bacterium)).